Here is a 384-residue protein sequence, read N- to C-terminus: Formate dehydrogenase, chloroplastic/mitochondrial (384 aa).

A chloroplast and mitochondrion-targeting transit peptide spans 1-29 (MAMRQAAKATIRACSSSSSSGYFARRQFN). Residues Ile128 and Asn152 each contribute to the substrate site. Residues 207–208 (RI), Asp227, 262–266 (PLTEK), Asn288, Asp314, and 338–341 (HTSG) contribute to the NAD(+) site.

It belongs to the D-isomer specific 2-hydroxyacid dehydrogenase family. FDH subfamily. In terms of assembly, homodimer.

Its subcellular location is the mitochondrion. It is found in the plastid. The protein resides in the chloroplast. It catalyses the reaction formate + NAD(+) = CO2 + NADH. Catalyzes the NAD(+)-dependent oxidation of formate to carbon dioxide. Involved in the cell stress response. The chain is Formate dehydrogenase, chloroplastic/mitochondrial (FDH1) from Arabidopsis thaliana (Mouse-ear cress).